We begin with the raw amino-acid sequence, 150 residues long: Putative esterase SSO1253 (150 aa).

This sequence belongs to the thioesterase PaaI family.

The sequence is that of Putative esterase SSO1253 from Saccharolobus solfataricus (strain ATCC 35092 / DSM 1617 / JCM 11322 / P2) (Sulfolobus solfataricus).